Consider the following 252-residue polypeptide: MDKLQNIRGVAFDLDGTLVDSAPGLAAAVDMALYALELPVAGEERVITWIGNGADVLMERALTWAREERATLRKTMGKPPVDEDIPAEEQVRILRKLFDRYYGEVAEEGTVLFPHVADTLGALHASGLSLGLVTNKPTPFVAPLLESLDIAKYFSVVIGGDDVQNKKPHPEPLLLVASRLGMMPEQMLFVGDSRNDIQAAKAAGCPSVGLTYGYNYGEAIALSEPDVIYDSFNDLLPALGLPHSDNQEIKND.

Asp-13 acts as the Nucleophile in catalysis. Positions 13, 15, and 192 each coordinate Mg(2+).

This sequence belongs to the HAD-like hydrolase superfamily. CbbY/CbbZ/Gph/YieH family. As to quaternary structure, monomer. Mg(2+) serves as cofactor. It depends on chloride as a cofactor.

It carries out the reaction 2-phosphoglycolate + H2O = glycolate + phosphate. Its pathway is organic acid metabolism; glycolate biosynthesis; glycolate from 2-phosphoglycolate: step 1/1. Functionally, specifically catalyzes the dephosphorylation of 2-phosphoglycolate. Is involved in the dissimilation of the intracellular 2-phosphoglycolate formed during the DNA repair of 3'-phosphoglycolate ends, a major class of DNA lesions induced by oxidative stress. In Salmonella typhimurium (strain LT2 / SGSC1412 / ATCC 700720), this protein is Phosphoglycolate phosphatase.